Reading from the N-terminus, the 176-residue chain is Cytochrome b (176 aa).

3 consecutive transmembrane segments (helical) span residues 33 to 53 (FGSL…FLAM), 77 to 98 (WLLR…YLHV), and 113 to 133 (WNMG…GYVL). The heme b site is built by histidine 83 and histidine 97.

The protein belongs to the cytochrome b family. The cytochrome bc1 complex contains 11 subunits: 3 respiratory subunits (MT-CYB, CYC1 and UQCRFS1), 2 core proteins (UQCRC1 and UQCRC2) and 6 low-molecular weight proteins (UQCRH/QCR6, UQCRB/QCR7, UQCRQ/QCR8, UQCR10/QCR9, UQCR11/QCR10 and a cleavage product of UQCRFS1). This cytochrome bc1 complex then forms a dimer. Heme b serves as cofactor.

It localises to the mitochondrion inner membrane. Functionally, component of the ubiquinol-cytochrome c reductase complex (complex III or cytochrome b-c1 complex) that is part of the mitochondrial respiratory chain. The b-c1 complex mediates electron transfer from ubiquinol to cytochrome c. Contributes to the generation of a proton gradient across the mitochondrial membrane that is then used for ATP synthesis. This is Cytochrome b (MT-CYB) from Tomopeas ravum (Blunt-eared bat).